We begin with the raw amino-acid sequence, 21 residues long: Buforin-2 (21 aa).

Residue K21 is modified to N6-(2-hydroxyisobutyryl)lysine; alternate.

Belongs to the histone H2A family. Expressed by the skin glands.

The protein localises to the secreted. Its function is as follows. Antimicrobial peptide with potent activity against some Gram-positive and Gram-negative bacteria. Does not permeabilize membrane, but internalizes into bacterial cells and alter specific gene expression involved in bacterial resistance mechanisms. Has the ability to agglutinate E.coli, and lipid vesicles. Shows a weak hemolytic activity, and is not cytotoxic to monocytes. In Sphaenorhynchus lacteus (Orinoco lime treefrog), this protein is Buforin-2.